A 95-amino-acid polypeptide reads, in one-letter code: Large ribosomal subunit protein uL23 (95 aa).

It belongs to the universal ribosomal protein uL23 family. As to quaternary structure, part of the 50S ribosomal subunit. Contacts protein L29, and trigger factor when it is bound to the ribosome.

One of the early assembly proteins it binds 23S rRNA. One of the proteins that surrounds the polypeptide exit tunnel on the outside of the ribosome. Forms the main docking site for trigger factor binding to the ribosome. This Geobacillus thermodenitrificans (strain NG80-2) protein is Large ribosomal subunit protein uL23.